The primary structure comprises 86 residues: Probable weak neurotoxin NNAM3 (86 aa).

The first 21 residues, 1-21 (MKTLLLTLVVVTIVCLDLGYT), serve as a signal peptide directing secretion. 5 disulfides stabilise this stretch: Cys24-Cys45, Cys27-Cys32, Cys38-Cys63, Cys67-Cys78, and Cys79-Cys84.

This sequence belongs to the three-finger toxin family. Ancestral subfamily. Orphan group II sub-subfamily. As to expression, expressed by the venom gland.

The protein resides in the secreted. Its function is as follows. Binds with low affinity to muscular (alpha-1-beta-1-delta-epsilon/CHRNA1-CHRNB1-CHRND-CHRNE) and very low affinity to neuronal (alpha-7/CHRNA7) nicotinic acetylcholine receptor (nAChR). This is Probable weak neurotoxin NNAM3 from Naja atra (Chinese cobra).